A 446-amino-acid polypeptide reads, in one-letter code: MREIVHIQAGQCGNQIGAKFWEVISDEHGVDPSGEYRGDSELQIERINVYFNEAAGGRYVPRAILVDLEPGTMDSVRAGPFGQIFRPDNFVFGQSGAGNNWAKGHYTEGAELVDAVLDVVRKRSEACDCLQGFQICHSLGGGTGAGMGTLLIAKIREEYPDRMMCTFSVVPSPKVSDTVVEPYNATLSVHQLVEHADEVFCIDNEALYDICFRTLKLTCPTYGDLNHLVSLVMSGCTSCLRFPGQLNADLRKLAVNLIPFPRLHFFLVGFAPLTSRGSQIYRALTVPELVSQMFDNKNMMAASDPRHGRYLTAAAMFRGRMSTKEVDEQMLNIQNKNSSYFVEWIPNNMKVSVCDIPPRGLKMAATFIGNSTCIQELFKRVGEQFSAMFRRKAFLHWYTGEGMDEMEFTEAESNMNDLVSEYQQYQEAGVDEGEEFEEEEDFGDEQ.

The GTP site is built by glutamine 11, glutamate 69, serine 138, glycine 142, threonine 143, glycine 144, asparagine 204, and asparagine 226. Glutamate 69 contributes to the Mg(2+) binding site. The segment at 427–446 is disordered; the sequence is EAGVDEGEEFEEEEDFGDEQ. Acidic residues predominate over residues 429–446; sequence GVDEGEEFEEEEDFGDEQ.

This sequence belongs to the tubulin family. Dimer of alpha and beta chains. A typical microtubule is a hollow water-filled tube with an outer diameter of 25 nm and an inner diameter of 15 nM. Alpha-beta heterodimers associate head-to-tail to form protofilaments running lengthwise along the microtubule wall with the beta-tubulin subunit facing the microtubule plus end conferring a structural polarity. Microtubules usually have 13 protofilaments but different protofilament numbers can be found in some organisms and specialized cells. Mg(2+) serves as cofactor.

The protein localises to the cytoplasm. It is found in the cytoskeleton. Its function is as follows. Tubulin is the major constituent of microtubules, a cylinder consisting of laterally associated linear protofilaments composed of alpha- and beta-tubulin heterodimers. Microtubules grow by the addition of GTP-tubulin dimers to the microtubule end, where a stabilizing cap forms. Below the cap, tubulin dimers are in GDP-bound state, owing to GTPase activity of alpha-tubulin. This is Tubulin beta chain from Giardia intestinalis (Giardia lamblia).